Consider the following 313-residue polypeptide: Formimidoylglutamase (313 aa).

6 residues coordinate Mn(2+): histidine 130, aspartate 155, histidine 157, aspartate 159, aspartate 241, and aspartate 243.

The protein belongs to the arginase family. Mn(2+) is required as a cofactor.

It catalyses the reaction N-formimidoyl-L-glutamate + H2O = formamide + L-glutamate. The protein operates within amino-acid degradation; L-histidine degradation into L-glutamate; L-glutamate from N-formimidoyl-L-glutamate (hydrolase route): step 1/1. Functionally, catalyzes the conversion of N-formimidoyl-L-glutamate to L-glutamate and formamide. The sequence is that of Formimidoylglutamase from Salmonella schwarzengrund (strain CVM19633).